The sequence spans 1219 residues: Disease resistance-like protein DSC1 (1219 aa).

Positions alanine 9–leucine 176 constitute a TIR domain. Glutamate 83 is an active-site residue. The NB-ARC domain maps to leucine 197–asparagine 446. Glycine 216–lysine 222 contacts ATP. LRR repeat units lie at residues leucine 468 to glutamate 493, threonine 538 to glycine 563, proline 597 to proline 619, lysine 620 to valine 642, alanine 665 to leucine 689, glutamate 690 to glutamine 713, serine 733 to arginine 757, leucine 759 to leucine 780, methionine 804 to serine 827, cysteine 854 to leucine 877, and serine 878 to glutamine 899.

Belongs to the disease resistance NB-LRR family. Interacts with CAMTA3 and DSC2.

The enzyme catalyses NAD(+) + H2O = ADP-D-ribose + nicotinamide + H(+). Its function is as follows. TIR-NB-LRR receptor-like protein involved in plant defense. Acts as a trigger of hypersensitive response (HR). Functions as a guard of CAMTA3, a negative regulator of immunity, during pathogen infection. This chain is Disease resistance-like protein DSC1, found in Arabidopsis thaliana (Mouse-ear cress).